Here is a 99-residue protein sequence, read N- to C-terminus: Citrate lyase acyl carrier protein (99 aa).

At serine 14 the chain carries O-(phosphoribosyl dephospho-coenzyme A)serine.

Belongs to the CitD family. Oligomer with a subunit composition of (alpha,beta,gamma)6.

The protein resides in the cytoplasm. In terms of biological role, covalent carrier of the coenzyme of citrate lyase. The polypeptide is Citrate lyase acyl carrier protein (Edwardsiella ictaluri (strain 93-146)).